Consider the following 399-residue polypeptide: Homeobox protein ceh-39 (399 aa).

Disordered regions lie at residues 32-91 (PEPA…GDTE) and 158-187 (AKKSRGRTAPRTPKSLETSKPGRGVKRPAS). Over residues 60–79 (SSMCGSSSSSSSSSYSSGSS) the composition is skewed to low complexity. The segment at residues 205 to 291 (NRQIGDDEEL…VRRALCFMKK (87 aa)) is a DNA-binding region (CUT). The homeobox DNA-binding region spans 315–374 (SDERIRRFTFTQTQLDSLHTVFQQQDRPNREMQQALSATLKLNRSTVGNFFMNARRRLPK).

This sequence belongs to the CUT homeobox family. In terms of tissue distribution, expressed in hermaphrodite gonads.

It is found in the nucleus. The protein localises to the chromosome. Functionally, transcriptional regulator which is involved in the sex determination and X chromosome dosage compensation pathways. Directly binds to 5'-ATTGAT-3' sites in the promoter of sex-determining factor xol-1 to negatively regulate its expression and promote hermaphrodite development. Associates with condensed DNA during mitosis. The protein is Homeobox protein ceh-39 of Caenorhabditis elegans.